The following is a 639-amino-acid chain: Immunoglobulin-like domain-containing receptor 2 (639 aa).

Positions 1–20 (MDRVLLRWISLFWLTAMVEG) are cleaved as a signal peptide. In terms of domain architecture, Ig-like V-type spans 21 to 162 (LQVTVPDKKK…LEGKNEDSVE (142 aa)). Residues 21–186 (LQVTVPDKKK…PSFAVEIMPE (166 aa)) are Lumenal-facing. A disulfide bridge connects residues cysteine 42 and cysteine 145. Residues 187–207 (WVFVGLVLLGVFLFFVLVGIC) form a helical membrane-spanning segment. Over 208-639 (WCQCCPHSCC…DFPTRMSLVV (432 aa)) the chain is Cytoplasmic. 3 disordered regions span residues 273-295 (LMDK…HSVR), 374-415 (WSGV…MLSR), and 437-639 (YGQR…SLVV). Basic and acidic residues-rich tracts occupy residues 393-414 (YNKE…EMLS) and 442-464 (RRAD…ESRA). Serine 473 bears the Phosphoserine mark. The span at 483-493 (RSREPLTDADR) shows a compositional bias: basic and acidic residues. Arginine 544 is subject to Omega-N-methylarginine. Position 579 is a phosphoserine (serine 579). Positions 606-617 (RGRDLPYHSNSE) are enriched in basic and acidic residues.

The protein belongs to the immunoglobulin superfamily. LISCH7 family. In terms of assembly, interacts with MARVELD2 and OCLN. Interacts with P4HB AND HSPA5; the interaction with HSPA5 stabilizes ILDR2 expression. Interacts (via C-terminus) with TRA2A, TRA2B and SRSF1. As to expression, expressed in testis, brain, pituitary, colon, heart, nerves, prostate, esophagus, lung liver and small intestine. Highly expressed in macrophages, also expressed in monocytes and at low levels in NK and NKT cells (at protein level).

Its subcellular location is the endoplasmic reticulum membrane. The protein localises to the cell junction. It is found in the tight junction. It localises to the nucleus. Its function is as follows. May be involved in ER stress pathways with effects on lipid homeostasis and insulin secretion. With ILDR1 and LSR, involved in the maintain of the epithelial barrier function through the recruitment of MARVELD2/tricellulin to tricellular tight junctions. Also functions as a B7-like protein family member expressed on immune cells and inflamed tissue and with T-cell inhibitory activity. In the inner ear, may regulate alternative pre-mRNA splicing via binding to TRA2A, TRA2B and SRSF1. This is Immunoglobulin-like domain-containing receptor 2 from Homo sapiens (Human).